The following is a 141-amino-acid chain: HTH-type transcriptional repressor NsrR (141 aa).

In terms of domain architecture, HTH rrf2-type spans 2–129 (QLTSFTDYGL…DQYTLADMVK (128 aa)). Positions 28–51 (ISEVTEVYGVSRNHMVKIINQLSR) form a DNA-binding region, H-T-H motif. The [2Fe-2S] cluster site is built by cysteine 91, cysteine 96, and cysteine 102.

Requires [2Fe-2S] cluster as cofactor.

In terms of biological role, nitric oxide-sensitive repressor of genes involved in protecting the cell against nitrosative stress. May require iron for activity. This chain is HTH-type transcriptional repressor NsrR, found in Pectobacterium atrosepticum (strain SCRI 1043 / ATCC BAA-672) (Erwinia carotovora subsp. atroseptica).